We begin with the raw amino-acid sequence, 269 residues long: Putative biopolymer transport protein ExbD (269 aa).

The Cytoplasmic portion of the chain corresponds to 1–40 (MASSPKAPKSHRKFQSIYHPTRPLSLWQDNQHDQGEVRIE). The helical transmembrane segment at 41 to 61 (IIPLIDVVFCILTFFILGAVG) threads the bilayer. The Periplasmic segment spans residues 62 to 269 (LSRQQAISLD…GNTVPSAPQQ (208 aa)). The interval 190–269 (NGANPGMSNF…GNTVPSAPQQ (80 aa)) is disordered. Positions 193–204 (NPGMSNFNNSNP) are enriched in low complexity.

It belongs to the ExbD/TolR family.

The protein resides in the cell inner membrane. This chain is Putative biopolymer transport protein ExbD, found in Synechocystis sp. (strain ATCC 27184 / PCC 6803 / Kazusa).